The following is a 311-amino-acid chain: HPr kinase/phosphorylase (311 aa).

Active-site residues include H138 and K159. ATP is bound at residue 153–160; the sequence is GDSGIGKS. A Mg(2+)-binding site is contributed by S160. The active-site Proton acceptor; for phosphorylation activity. Proton donor; for dephosphorylation activity is the D177. An important for the catalytic mechanism of both phosphorylation and dephosphorylation region spans residues 201–210; sequence IEIRGVGIID. E202 contributes to the Mg(2+) binding site. Residue R243 is part of the active site. The segment at 264–269 is important for the catalytic mechanism of dephosphorylation; sequence PVKTGR.

The protein belongs to the HPrK/P family. As to quaternary structure, homohexamer. It depends on Mg(2+) as a cofactor.

The catalysed reaction is [HPr protein]-L-serine + ATP = [HPr protein]-O-phospho-L-serine + ADP + H(+). It catalyses the reaction [HPr protein]-O-phospho-L-serine + phosphate + H(+) = [HPr protein]-L-serine + diphosphate. Catalyzes the ATP- as well as the pyrophosphate-dependent phosphorylation of a specific serine residue in HPr, a phosphocarrier protein of the phosphoenolpyruvate-dependent sugar phosphotransferase system (PTS). HprK/P also catalyzes the pyrophosphate-producing, inorganic phosphate-dependent dephosphorylation (phosphorolysis) of seryl-phosphorylated HPr (P-Ser-HPr). The two antagonistic activities of HprK/P are regulated by several intracellular metabolites, which change their concentration in response to the absence or presence of rapidly metabolisable carbon sources (glucose, fructose, etc.) in the growth medium. Therefore, by controlling the phosphorylation state of HPr, HPrK/P is a sensor enzyme that plays a major role in the regulation of carbon metabolism and sugar transport: it mediates carbon catabolite repression (CCR), and regulates PTS-catalyzed carbohydrate uptake and inducer exclusion. In Streptococcus pneumoniae serotype 2 (strain D39 / NCTC 7466), this protein is HPr kinase/phosphorylase.